A 727-amino-acid polypeptide reads, in one-letter code: ATP-dependent zinc metalloprotease FtsH (727 aa).

The Cytoplasmic portion of the chain corresponds to 1–6 (MQKAFR). Residues 7 to 27 (NVLVIAIIGVIIFGVFSYING) form a helical membrane-spanning segment. Residues 28-110 (NGNTPKQLSY…KVKEEEKQSV (83 aa)) are Extracellular-facing. Residues 111–131 (FVSMLTTLIPVLIIAFLFIFF) traverse the membrane as a helical segment. Topologically, residues 132–727 (LSQAQGGGGG…PNDPNNPSNR (596 aa)) are cytoplasmic. 205 to 212 (GPPGTGKT) is a binding site for ATP. Position 427 (histidine 427) interacts with Zn(2+). Residue glutamate 428 is part of the active site. Residues histidine 431 and aspartate 503 each contribute to the Zn(2+) site. Basic and acidic residues-rich tracts occupy residues 645 to 684 (LEEGKEDMREDRKEDNDMNRERRHRQRDDRDNQTGHDQLR) and 691 to 706 (NDQHRGHSNNEEDTGH). Residues 645-727 (LEEGKEDMRE…PNDPNNPSNR (83 aa)) form a disordered region. A compositionally biased stretch (low complexity) spans 710-727 (PNIDKPYNPNDPNNPSNR).

It in the central section; belongs to the AAA ATPase family. In the C-terminal section; belongs to the peptidase M41 family. In terms of assembly, homohexamer. It depends on Zn(2+) as a cofactor.

The protein localises to the cell membrane. Acts as a processive, ATP-dependent zinc metallopeptidase for both cytoplasmic and membrane proteins. Plays a role in the quality control of integral membrane proteins. The chain is ATP-dependent zinc metalloprotease FtsH from Staphylococcus haemolyticus (strain JCSC1435).